Reading from the N-terminus, the 49-residue chain is Large ribosomal subunit protein bL33 (49 aa).

Belongs to the bacterial ribosomal protein bL33 family.

This chain is Large ribosomal subunit protein bL33, found in Desulforamulus reducens (strain ATCC BAA-1160 / DSM 100696 / MI-1) (Desulfotomaculum reducens).